Here is a 369-residue protein sequence, read N- to C-terminus: NADH-quinone oxidoreductase subunit H (369 aa).

Helical transmembrane passes span 20–40, 88–108, 133–153, 179–199, 205–225, 267–287, 293–313, and 328–348; these read VLLIKIMAVIISVMVSVAYLV, ICFLIAPIITFTLALLGWAVI, IGVLYILAISSLGVYGIIIAG, IGLTIVTVLLATGSLKLGEIV, MPYWIDLLLLPMACVFFISSL, ILINAMAVIFFFGGWYPPLNI, IPGIIWFVLKIIVLLFCFIWI, and LGWKVFLPISLLWVVLVSGVL.

The protein belongs to the complex I subunit 1 family. NDH-1 is composed of 14 different subunits. Subunits NuoA, H, J, K, L, M, N constitute the membrane sector of the complex.

It localises to the cell inner membrane. The catalysed reaction is a quinone + NADH + 5 H(+)(in) = a quinol + NAD(+) + 4 H(+)(out). NDH-1 shuttles electrons from NADH, via FMN and iron-sulfur (Fe-S) centers, to quinones in the respiratory chain. The immediate electron acceptor for the enzyme in this species is believed to be ubiquinone. Couples the redox reaction to proton translocation (for every two electrons transferred, four hydrogen ions are translocated across the cytoplasmic membrane), and thus conserves the redox energy in a proton gradient. This subunit may bind ubiquinone. The sequence is that of NADH-quinone oxidoreductase subunit H from Ehrlichia canis (strain Jake).